Here is a 379-residue protein sequence, read N- to C-terminus: All-trans-retinol dehydrogenase [NAD(+)] ADH4 (379 aa).

Thr1 carries the post-translational modification N-acetylthreonine. Zn(2+) contacts are provided by Cys46, His68, Cys98, Cys101, Cys104, Cys112, and Cys179. Residues Gly204 to Gly209, Asp228, Lys233, Val297 to Val299, and Arg374 contribute to the NAD(+) site.

It belongs to the zinc-containing alcohol dehydrogenase family. Class-II subfamily. In terms of assembly, homodimer. Zn(2+) serves as cofactor.

It is found in the cytoplasm. It catalyses the reaction all-trans-retinol + NAD(+) = all-trans-retinal + NADH + H(+). It carries out the reaction 9-cis-retinol + NAD(+) = 9-cis-retinal + NADH + H(+). The enzyme catalyses 20-oxo-(5Z,8Z,11Z,14Z)-eicosatetraenoate + NAD(+) + H2O = (5Z,8Z,11Z,14Z)-eicosatetraenedioate + NADH + 2 H(+). The catalysed reaction is 20-hydroxy-(5Z,8Z,11Z,14Z)-eicosatetraenoate + NAD(+) = 20-oxo-(5Z,8Z,11Z,14Z)-eicosatetraenoate + NADH + H(+). It catalyses the reaction 1,4-benzoquinone + NADH + H(+) = hydroquinone + NAD(+). With respect to regulation, oxidation of 20-HETE is inhibited by low concentrations of N-heptylformamide. Oxidation of 20-HETE is a decreased by 55-65% by either all-trans-retinol or all-trans-retinoic acid. Strongly inhibited by omega-hydroxy fatty acids. Catalyzes the NAD-dependent oxidation of either all-trans-retinol or 9-cis-retinol. Also oxidizes long chain omega-hydroxy fatty acids, such as 20-HETE, producing both the intermediate aldehyde, 20-oxoarachidonate and the end product, a dicarboxylic acid, (5Z,8Z,11Z,14Z)-eicosatetraenedioate. Also catalyzes the reduction of benzoquinones. This Struthio camelus (Common ostrich) protein is All-trans-retinol dehydrogenase [NAD(+)] ADH4.